We begin with the raw amino-acid sequence, 199 residues long: Probable chemoreceptor glutamine deamidase CheD (199 aa).

This sequence belongs to the CheD family.

It catalyses the reaction L-glutaminyl-[protein] + H2O = L-glutamyl-[protein] + NH4(+). Probably deamidates glutamine residues to glutamate on methyl-accepting chemotaxis receptors (MCPs), playing an important role in chemotaxis. In Cereibacter sphaeroides (strain ATCC 17023 / DSM 158 / JCM 6121 / CCUG 31486 / LMG 2827 / NBRC 12203 / NCIMB 8253 / ATH 2.4.1.) (Rhodobacter sphaeroides), this protein is Probable chemoreceptor glutamine deamidase CheD.